Consider the following 341-residue polypeptide: tRNA N6-adenosine threonylcarbamoyltransferase (341 aa).

Residues H111 and H115 each contribute to the Fe cation site. Substrate contacts are provided by residues 134-138 (LVSGG), D167, G180, and N274. D302 serves as a coordination point for Fe cation.

It belongs to the KAE1 / TsaD family. Fe(2+) serves as cofactor.

It localises to the cytoplasm. It carries out the reaction L-threonylcarbamoyladenylate + adenosine(37) in tRNA = N(6)-L-threonylcarbamoyladenosine(37) in tRNA + AMP + H(+). Required for the formation of a threonylcarbamoyl group on adenosine at position 37 (t(6)A37) in tRNAs that read codons beginning with adenine. Is involved in the transfer of the threonylcarbamoyl moiety of threonylcarbamoyl-AMP (TC-AMP) to the N6 group of A37, together with TsaE and TsaB. TsaD likely plays a direct catalytic role in this reaction. This chain is tRNA N6-adenosine threonylcarbamoyltransferase, found in Paraburkholderia phymatum (strain DSM 17167 / CIP 108236 / LMG 21445 / STM815) (Burkholderia phymatum).